Reading from the N-terminus, the 372-residue chain is tRNA-specific 2-thiouridylase MnmA (372 aa).

Residues 9-16 (GLSGGVDS) and M35 each bind ATP. The tract at residues 95-97 (NPD) is interaction with target base in tRNA. The active-site Nucleophile is C100. C100 and C198 form a disulfide bridge. G124 contributes to the ATP binding site. The segment at 148-150 (KDQ) is interaction with tRNA. The active-site Cysteine persulfide intermediate is the C198. The interval 317-318 (RY) is interaction with tRNA.

It belongs to the MnmA/TRMU family.

It localises to the cytoplasm. It catalyses the reaction S-sulfanyl-L-cysteinyl-[protein] + uridine(34) in tRNA + AH2 + ATP = 2-thiouridine(34) in tRNA + L-cysteinyl-[protein] + A + AMP + diphosphate + H(+). In terms of biological role, catalyzes the 2-thiolation of uridine at the wobble position (U34) of tRNA, leading to the formation of s(2)U34. The chain is tRNA-specific 2-thiouridylase MnmA from Delftia acidovorans (strain DSM 14801 / SPH-1).